The following is a 362-amino-acid chain: Chorismate synthase (362 aa).

Arginine 46 serves as a coordination point for NADP(+). FMN contacts are provided by residues 122 to 124 (RSS), 238 to 239 (NA), glycine 278, 293 to 297 (KPTPS), and arginine 319.

The protein belongs to the chorismate synthase family. In terms of assembly, homotetramer. FMNH2 is required as a cofactor.

It catalyses the reaction 5-O-(1-carboxyvinyl)-3-phosphoshikimate = chorismate + phosphate. It functions in the pathway metabolic intermediate biosynthesis; chorismate biosynthesis; chorismate from D-erythrose 4-phosphate and phosphoenolpyruvate: step 7/7. In terms of biological role, catalyzes the anti-1,4-elimination of the C-3 phosphate and the C-6 proR hydrogen from 5-enolpyruvylshikimate-3-phosphate (EPSP) to yield chorismate, which is the branch point compound that serves as the starting substrate for the three terminal pathways of aromatic amino acid biosynthesis. This reaction introduces a second double bond into the aromatic ring system. The polypeptide is Chorismate synthase (Campylobacter jejuni subsp. jejuni serotype O:6 (strain 81116 / NCTC 11828)).